We begin with the raw amino-acid sequence, 281 residues long: Large ribosomal subunit protein uL2 (281 aa).

A disordered region spans residues 220 to 281 (VRGSVMNPND…RRRDGKALSK (62 aa)). The span at 258-271 (KTRKKNKQSNKMIM) shows a compositional bias: basic residues. Over residues 272-281 (RRRDGKALSK) the composition is skewed to basic and acidic residues.

This sequence belongs to the universal ribosomal protein uL2 family. As to quaternary structure, part of the 50S ribosomal subunit. Forms a bridge to the 30S subunit in the 70S ribosome.

In terms of biological role, one of the primary rRNA binding proteins. Required for association of the 30S and 50S subunits to form the 70S ribosome, for tRNA binding and peptide bond formation. It has been suggested to have peptidyltransferase activity; this is somewhat controversial. Makes several contacts with the 16S rRNA in the 70S ribosome. In Lachnoclostridium phytofermentans (strain ATCC 700394 / DSM 18823 / ISDg) (Clostridium phytofermentans), this protein is Large ribosomal subunit protein uL2.